Here is a 178-residue protein sequence, read N- to C-terminus: Cytochrome b6-f complex iron-sulfur subunit (178 aa).

The helical transmembrane segment at 20 to 42 (LLTFGSVTGVALGALYPVANYFI) threads the bilayer. In terms of domain architecture, Rieske spans 65-161 (ASGWLSSHPE…VSVENDNVFV (97 aa)). [2Fe-2S] cluster is bound by residues Cys-107, His-109, Cys-125, and His-128. A disulfide bridge connects residues Cys-112 and Cys-127.

This sequence belongs to the Rieske iron-sulfur protein family. In terms of assembly, the 4 large subunits of the cytochrome b6-f complex are cytochrome b6, subunit IV (17 kDa polypeptide, PetD), cytochrome f and the Rieske protein, while the 4 small subunits are PetG, PetL, PetM and PetN. The complex functions as a dimer. Requires [2Fe-2S] cluster as cofactor.

It localises to the cellular thylakoid membrane. It catalyses the reaction 2 oxidized [plastocyanin] + a plastoquinol + 2 H(+)(in) = 2 reduced [plastocyanin] + a plastoquinone + 4 H(+)(out). In terms of biological role, component of the cytochrome b6-f complex, which mediates electron transfer between photosystem II (PSII) and photosystem I (PSI), cyclic electron flow around PSI, and state transitions. The sequence is that of Cytochrome b6-f complex iron-sulfur subunit from Synechococcus sp. (strain CC9605).